A 236-amino-acid polypeptide reads, in one-letter code: Small ribosomal subunit protein uS3 (236 aa).

The region spanning 38–106 is the KH type-2 domain; the sequence is LRRYLHTRLK…DIQINISEIK (69 aa). A disordered region spans residues 211 to 236; the sequence is DLSPNVQAQQRKMKESPQQRRQRRGG.

This sequence belongs to the universal ribosomal protein uS3 family. Part of the 30S ribosomal subunit. Forms a tight complex with proteins S10 and S14.

Functionally, binds the lower part of the 30S subunit head. Binds mRNA in the 70S ribosome, positioning it for translation. The protein is Small ribosomal subunit protein uS3 of Salinibacter ruber (strain DSM 13855 / M31).